The following is a 428-amino-acid chain: D-amino acid dehydrogenase (428 aa).

Position 3–17 (3–17 (VVILGSGVVGVASAY)) interacts with FAD.

It belongs to the DadA oxidoreductase family. FAD serves as cofactor.

The catalysed reaction is a D-alpha-amino acid + A + H2O = a 2-oxocarboxylate + AH2 + NH4(+). Its pathway is amino-acid degradation; D-alanine degradation; NH(3) and pyruvate from D-alanine: step 1/1. In terms of biological role, oxidative deamination of D-amino acids. The protein is D-amino acid dehydrogenase of Burkholderia pseudomallei (strain K96243).